Reading from the N-terminus, the 344-residue chain is Serine/arginine-rich splicing factor 6 (344 aa).

One can recognise an RRM 1 domain in the interval 1-72 (MPRVYIGRLS…ERVIVEHARG (72 aa)). A phosphoserine mark is found at S45, S81, and S84. A disordered region spans residues 75–103 (RDRDGYSYGSRSGGGGYSSRRTSGRDKYG). Residues 110–183 (YRLIVENLSS…RNIRLIEDKP (74 aa)) enclose the RRM 2 domain. Residue K165 is modified to N6-acetyllysine. Positions 176–344 (IRLIEDKPRT…RSRSRSSSRD (169 aa)) are disordered. A Glycyl lysine isopeptide (Lys-Gly) (interchain with G-Cter in SUMO2) cross-link involves residue K182. The segment covering 185–250 (TSHRRSYSGS…RKSRSKSKSK (66 aa)) has biased composition (basic residues). Composition is skewed to basic and acidic residues over residues 264-273 (RSKDEYEKSR) and 280-291 (SPKENGKGDIKS). Residues S297 and S299 each carry the phosphoserine modification. At S303 the chain carries Phosphoserine; by DYRK1A. Phosphoserine is present on residues S314 and S316. Over residues 322–344 (ATSRSRSRSRSKSRSRSRSSSRD) the composition is skewed to basic residues.

Belongs to the splicing factor SR family. As to quaternary structure, binds SREK1/SFRS12. Interacts with DYRK1A. Extensively phosphorylated on serine residues in the RS domain. Phosphorylated by DYRK1A, probably in the RS domain. Phosphorylation by DYRK1A modulates alternative splice site selection and inhibits the expression of MAPT/Tau exon 10.

Its subcellular location is the nucleus. The protein localises to the nucleus speckle. Functionally, plays a role in constitutive splicing and modulates the selection of alternative splice sites. Plays a role in the alternative splicing of MAPT/Tau exon 10. Binds to alternative exons of TNC pre-mRNA and promotes the expression of alternatively spliced TNC. Plays a role in wound healing and in the regulation of keratinocyte differentiation and proliferation via its role in alternative splicing. The polypeptide is Serine/arginine-rich splicing factor 6 (SRSF6) (Homo sapiens (Human)).